The chain runs to 454 residues: Bifunctional protein GlmU (454 aa).

The pyrophosphorylase stretch occupies residues 1–232; that stretch reads MTDRTCLSIV…VDNVIGINNR (232 aa). Residues 11 to 14, Lys-25, Gln-78, and 83 to 84 contribute to the UDP-N-acetyl-alpha-D-glucosamine site; these read LAAG and GT. Position 108 (Asp-108) interacts with Mg(2+). UDP-N-acetyl-alpha-D-glucosamine is bound by residues Gly-144, Glu-158, Asn-173, and Asn-230. Asn-230 is a binding site for Mg(2+). Residues 233-253 are linker; that stretch reads AELAEAETIWQNRKRRELMLS. Positions 254 to 454 are N-acetyltransferase; the sequence is GVTLIAPETV…AIKAAKSVSK (201 aa). Residues Arg-319 and Lys-337 each contribute to the UDP-N-acetyl-alpha-D-glucosamine site. His-349 serves as the catalytic Proton acceptor. The UDP-N-acetyl-alpha-D-glucosamine site is built by Tyr-352 and Asn-363. Acetyl-CoA-binding positions include Ala-366, 372–373, Ser-391, Ser-409, and Arg-426; that span reads NY.

This sequence in the N-terminal section; belongs to the N-acetylglucosamine-1-phosphate uridyltransferase family. The protein in the C-terminal section; belongs to the transferase hexapeptide repeat family. Homotrimer. The cofactor is Mg(2+).

It is found in the cytoplasm. The catalysed reaction is alpha-D-glucosamine 1-phosphate + acetyl-CoA = N-acetyl-alpha-D-glucosamine 1-phosphate + CoA + H(+). It catalyses the reaction N-acetyl-alpha-D-glucosamine 1-phosphate + UTP + H(+) = UDP-N-acetyl-alpha-D-glucosamine + diphosphate. It functions in the pathway nucleotide-sugar biosynthesis; UDP-N-acetyl-alpha-D-glucosamine biosynthesis; N-acetyl-alpha-D-glucosamine 1-phosphate from alpha-D-glucosamine 6-phosphate (route II): step 2/2. It participates in nucleotide-sugar biosynthesis; UDP-N-acetyl-alpha-D-glucosamine biosynthesis; UDP-N-acetyl-alpha-D-glucosamine from N-acetyl-alpha-D-glucosamine 1-phosphate: step 1/1. Its pathway is bacterial outer membrane biogenesis; LPS lipid A biosynthesis. Functionally, catalyzes the last two sequential reactions in the de novo biosynthetic pathway for UDP-N-acetylglucosamine (UDP-GlcNAc). The C-terminal domain catalyzes the transfer of acetyl group from acetyl coenzyme A to glucosamine-1-phosphate (GlcN-1-P) to produce N-acetylglucosamine-1-phosphate (GlcNAc-1-P), which is converted into UDP-GlcNAc by the transfer of uridine 5-monophosphate (from uridine 5-triphosphate), a reaction catalyzed by the N-terminal domain. In Brucella canis (strain ATCC 23365 / NCTC 10854 / RM-666), this protein is Bifunctional protein GlmU.